We begin with the raw amino-acid sequence, 184 residues long: Protein GrpE (184 aa).

Positions 1 to 12 are enriched in basic and acidic residues; it reads MADEQLNEKDLN. The disordered stretch occupies residues 1–22; it reads MADEQLNEKDLNAEEAGAVDNG.

Belongs to the GrpE family. Homodimer.

The protein resides in the cytoplasm. Its function is as follows. Participates actively in the response to hyperosmotic and heat shock by preventing the aggregation of stress-denatured proteins, in association with DnaK and GrpE. It is the nucleotide exchange factor for DnaK and may function as a thermosensor. Unfolded proteins bind initially to DnaJ; upon interaction with the DnaJ-bound protein, DnaK hydrolyzes its bound ATP, resulting in the formation of a stable complex. GrpE releases ADP from DnaK; ATP binding to DnaK triggers the release of the substrate protein, thus completing the reaction cycle. Several rounds of ATP-dependent interactions between DnaJ, DnaK and GrpE are required for fully efficient folding. This is Protein GrpE from Pseudomonas putida (strain W619).